The sequence spans 213 residues: Charged multivesicular body protein 2b (213 aa).

Position 2 is an N-acetylalanine (Ala2). A coiled-coil region spans residues 25-55 (QRAIIRDRAALEKQEKQLELEIKKMAKIGNK). Over residues 179–194 (AKAPSAARSLPSASTS) the composition is skewed to low complexity. The tract at residues 179 to 199 (AKAPSAARSLPSASTSKATIS) is disordered. Ser199 carries the post-translational modification Phosphoserine. Residues 201 to 211 (EEIERQLKALG) carry the MIT-interacting motif motif.

This sequence belongs to the SNF7 family. In terms of assembly, probable core component of the endosomal sorting required for transport complex III (ESCRT-III). ESCRT-III components are thought to multimerize to form a flat lattice on the perimeter membrane of the endosome. Several assembly forms of ESCRT-III may exist that interact and act sequentially. Interacts with CHMP2A. Interacts with VPS4A. Interacts with VPS4B; the interaction is direct. In terms of tissue distribution, widely expressed. Expressed in brain, heart, skeletal muscle, spleen, kidney, liver, small intestine, pancreas, lung, placenta and leukocytes. In brain, it is expressed in cerebellum, cerebral cortex, medulla, spinal cord, occipital lobe, frontal lobe, temporal lobe and putamen.

The protein localises to the cytoplasm. It localises to the cytosol. The protein resides in the late endosome membrane. In terms of biological role, probable core component of the endosomal sorting required for transport complex III (ESCRT-III) which is involved in multivesicular bodies (MVBs) formation and sorting of endosomal cargo proteins into MVBs. MVBs contain intraluminal vesicles (ILVs) that are generated by invagination and scission from the limiting membrane of the endosome and mostly are delivered to lysosomes enabling degradation of membrane proteins, such as stimulated growth factor receptors, lysosomal enzymes and lipids. The MVB pathway appears to require the sequential function of ESCRT-O, -I,-II and -III complexes. ESCRT-III proteins mostly dissociate from the invaginating membrane before the ILV is released. The ESCRT machinery also functions in topologically equivalent membrane fission events, such as the terminal stages of cytokinesis and the budding of enveloped viruses (HIV-1 and other lentiviruses). ESCRT-III proteins are believed to mediate the necessary vesicle extrusion and/or membrane fission activities, possibly in conjunction with the AAA ATPase VPS4. The polypeptide is Charged multivesicular body protein 2b (CHMP2B) (Homo sapiens (Human)).